Consider the following 260-residue polypeptide: Homeobox protein Hox-D11b (260 aa).

The segment covering 1–14 (MFSSSFSYPSKTSP) has biased composition (low complexity). Disordered stretches follow at residues 1-21 (MFSS…PFLA) and 151-206 (ITPG…CTRR). The span at 167-179 (RSPDGESSEERAG) shows a compositional bias: basic and acidic residues. A DNA-binding region (homeobox; truncated) is located at residues 205–260 (RRKKRCPYSKQQIIELEREFLFNIYINKDRRMQLSHLLRLTDRCVNNPLNQDSFFT).

The protein belongs to the Abd-B homeobox family.

The protein localises to the nucleus. Functionally, sequence-specific transcription factor which is part of a developmental regulatory system that provides cells with specific positional identities on the anterior-posterior axis. The chain is Homeobox protein Hox-D11b (hoxd11b) from Takifugu rubripes (Japanese pufferfish).